Consider the following 238-residue polypeptide: Protein LicA homolog (238 aa).

The protein belongs to the peptidase S49 family.

This Mycoplasma capricolum subsp. capricolum (strain California kid / ATCC 27343 / NCTC 10154) protein is Protein LicA homolog (licA).